The sequence spans 226 residues: DNA mismatch repair protein MutH (226 aa).

Belongs to the MutH family.

The protein localises to the cytoplasm. Its function is as follows. Sequence-specific endonuclease that cleaves unmethylated GATC sequences. It is involved in DNA mismatch repair. The chain is DNA mismatch repair protein MutH from Actinobacillus pleuropneumoniae serotype 3 (strain JL03).